A 149-amino-acid chain; its full sequence is D-aminoacyl-tRNA deacylase (149 aa).

The Gly-cisPro motif, important for rejection of L-amino acids motif lies at 137–138; it reads GP.

It belongs to the DTD family. As to quaternary structure, homodimer.

The protein resides in the cytoplasm. The enzyme catalyses glycyl-tRNA(Ala) + H2O = tRNA(Ala) + glycine + H(+). It carries out the reaction a D-aminoacyl-tRNA + H2O = a tRNA + a D-alpha-amino acid + H(+). An aminoacyl-tRNA editing enzyme that deacylates mischarged D-aminoacyl-tRNAs. Also deacylates mischarged glycyl-tRNA(Ala), protecting cells against glycine mischarging by AlaRS. Acts via tRNA-based rather than protein-based catalysis; rejects L-amino acids rather than detecting D-amino acids in the active site. By recycling D-aminoacyl-tRNA to D-amino acids and free tRNA molecules, this enzyme counteracts the toxicity associated with the formation of D-aminoacyl-tRNA entities in vivo and helps enforce protein L-homochirality. This is D-aminoacyl-tRNA deacylase from Clostridium tetani (strain Massachusetts / E88).